We begin with the raw amino-acid sequence, 481 residues long: Aspartyl/glutamyl-tRNA(Asn/Gln) amidotransferase subunit B (481 aa).

This sequence belongs to the GatB/GatE family. GatB subfamily. Heterotrimer of A, B and C subunits.

The enzyme catalyses L-glutamyl-tRNA(Gln) + L-glutamine + ATP + H2O = L-glutaminyl-tRNA(Gln) + L-glutamate + ADP + phosphate + H(+). The catalysed reaction is L-aspartyl-tRNA(Asn) + L-glutamine + ATP + H2O = L-asparaginyl-tRNA(Asn) + L-glutamate + ADP + phosphate + 2 H(+). Its function is as follows. Allows the formation of correctly charged Asn-tRNA(Asn) or Gln-tRNA(Gln) through the transamidation of misacylated Asp-tRNA(Asn) or Glu-tRNA(Gln) in organisms which lack either or both of asparaginyl-tRNA or glutaminyl-tRNA synthetases. The reaction takes place in the presence of glutamine and ATP through an activated phospho-Asp-tRNA(Asn) or phospho-Glu-tRNA(Gln). This chain is Aspartyl/glutamyl-tRNA(Asn/Gln) amidotransferase subunit B, found in Fusobacterium nucleatum subsp. nucleatum (strain ATCC 25586 / DSM 15643 / BCRC 10681 / CIP 101130 / JCM 8532 / KCTC 2640 / LMG 13131 / VPI 4355).